Here is a 444-residue protein sequence, read N- to C-terminus: Tol-Pal system protein TolB (444 aa).

Residues 1-19 (MRNIIYFILSLLFSFKGYA) form the signal peptide.

Belongs to the TolB family. As to quaternary structure, the Tol-Pal system is composed of five core proteins: the inner membrane proteins TolA, TolQ and TolR, the periplasmic protein TolB and the outer membrane protein Pal. They form a network linking the inner and outer membranes and the peptidoglycan layer.

Its subcellular location is the periplasm. In terms of biological role, part of the Tol-Pal system, which plays a role in outer membrane invagination during cell division and is important for maintaining outer membrane integrity. The polypeptide is Tol-Pal system protein TolB (Rickettsia felis (strain ATCC VR-1525 / URRWXCal2) (Rickettsia azadi)).